Consider the following 410-residue polypeptide: Translation initiation factor 2 subunit gamma (410 aa).

In terms of domain architecture, tr-type G spans 6 to 203 (QSEVNIGMVG…AIQEFIPTPK (198 aa)). The tract at residues 15–22 (GHVDHGKT) is G1. Mg(2+)-binding residues include Asp-18, Thr-22, Gly-43, and Ser-45. 18 to 23 (DHGKTS) serves as a coordination point for GTP. The tract at residues 43–47 (GISIR) is G2. Zn(2+) contacts are provided by Cys-58, Cys-61, Cys-73, and Cys-76. The G3 stretch occupies residues 90–93 (DAPG). GTP-binding positions include 146-149 (NKID) and 181-183 (SAH). Positions 146–149 (NKID) are G4. Residues 181 to 183 (SAH) form a G5 region.

The protein belongs to the TRAFAC class translation factor GTPase superfamily. Classic translation factor GTPase family. EIF2G subfamily. As to quaternary structure, heterotrimer composed of an alpha, a beta and a gamma chain. The cofactor is Mg(2+).

It catalyses the reaction GTP + H2O = GDP + phosphate + H(+). EIF-2 functions in the early steps of protein synthesis by forming a ternary complex with GTP and initiator tRNA. The sequence is that of Translation initiation factor 2 subunit gamma from Methanococcus vannielii (strain ATCC 35089 / DSM 1224 / JCM 13029 / OCM 148 / SB).